The chain runs to 262 residues: uncharacterized protein (262 aa).

The helical transmembrane segment at 13-35 (VVGALLTVVVIVTAAGIIYVISH) threads the bilayer.

The protein localises to the membrane. This is an uncharacterized protein from Archaeoglobus fulgidus (strain ATCC 49558 / DSM 4304 / JCM 9628 / NBRC 100126 / VC-16).